A 99-amino-acid polypeptide reads, in one-letter code: Nucleoid-associated protein SPN23F10240 (99 aa).

The protein belongs to the YbaB/EbfC family. Homodimer.

Its subcellular location is the cytoplasm. The protein localises to the nucleoid. In terms of biological role, binds to DNA and alters its conformation. May be involved in regulation of gene expression, nucleoid organization and DNA protection. The chain is Nucleoid-associated protein SPN23F10240 from Streptococcus pneumoniae (strain ATCC 700669 / Spain 23F-1).